Consider the following 432-residue polypeptide: Glutamate-1-semialdehyde 2,1-aminomutase (432 aa).

Lysine 269 carries the post-translational modification N6-(pyridoxal phosphate)lysine.

This sequence belongs to the class-III pyridoxal-phosphate-dependent aminotransferase family. HemL subfamily. As to quaternary structure, homodimer. Requires pyridoxal 5'-phosphate as cofactor.

It localises to the cytoplasm. The catalysed reaction is (S)-4-amino-5-oxopentanoate = 5-aminolevulinate. Its pathway is porphyrin-containing compound metabolism; protoporphyrin-IX biosynthesis; 5-aminolevulinate from L-glutamyl-tRNA(Glu): step 2/2. This Desulforamulus reducens (strain ATCC BAA-1160 / DSM 100696 / MI-1) (Desulfotomaculum reducens) protein is Glutamate-1-semialdehyde 2,1-aminomutase.